A 149-amino-acid chain; its full sequence is Pleckstrin homology domain-containing family J member 1 (149 aa).

The PH domain maps to 15 to 108 (PAEMAAELGM…WMEALRRASY (94 aa)).

In terms of tissue distribution, expressed in testis and liver.

This Homo sapiens (Human) protein is Pleckstrin homology domain-containing family J member 1 (PLEKHJ1).